Here is a 79-residue protein sequence, read N- to C-terminus: Sulfur carrier protein TusA (79 aa).

Residue C17 is the Cysteine persulfide intermediate of the active site.

The protein belongs to the sulfur carrier protein TusA family.

Its subcellular location is the cytoplasm. In terms of biological role, sulfur carrier protein which probably makes part of a sulfur-relay system. The chain is Sulfur carrier protein TusA from Idiomarina loihiensis (strain ATCC BAA-735 / DSM 15497 / L2-TR).